The primary structure comprises 686 residues: Soluble guanylate cyclase gcy-34 (686 aa).

H105 serves as a coordination point for heme. 2 coiled-coil regions span residues 306–335 (KKHM…ELTQ) and 398–432 (VEVN…LKDM). A Guanylate cyclase domain is found at 455–583 (TVMFCDLPAF…ETVTLASQME (129 aa)). 2 residues coordinate Mg(2+): D460 and D504.

It belongs to the adenylyl cyclase class-4/guanylyl cyclase family. As to quaternary structure, heterodimer; with other soluble guanylate cyclases. Heme serves as cofactor. Expressed in a small number of neurons, corresponding to URX, AQR and PQR neurons.

It localises to the cytoplasm. It catalyses the reaction GTP = 3',5'-cyclic GMP + diphosphate. Its activity is regulated as follows. May be regulated by molecular oxygen. Probably not activated by nitric oxide (NO). Functionally, synthesizes cyclic GMP (cGMP) from GTP. May be involved in sensitivity to quinine by regulating egl-4 activity through the production of cGMP. This is Soluble guanylate cyclase gcy-34 (gcy-34) from Caenorhabditis elegans.